The sequence spans 965 residues: Collagen alpha-1(I) chain (965 aa).

Positions 1–965 (GGISVPGPMG…PGPPGPPGPP (965 aa)) are disordered. 4-hydroxyproline occurs at positions 18, 21, 23, 32, 35, 38, 53, 68, 74, 83, and 89. A compositionally biased stretch (low complexity) spans 26–44 (QGFQGPPGEPGEPGSSGPM). The span at 56–70 (NGDDGEAGKPGRPGE) shows a compositional bias: basic and acidic residues. K92 is modified (5-hydroxylysine; alternate). O-linked (Gal...) hydroxylysine; alternate glycosylation occurs at K92. Residue S98 is modified to Phosphoserine. Over residues 106–122 (DAGPAGPKGEPGSPGEN) the composition is skewed to low complexity. P116, P119, P125, P139, P160, P169, P172, P199, P202, P214, P220, P229, P235, P238, and P253 each carry 4-hydroxyproline. Low complexity predominate over residues 139-157 (PGASGPAGARGNDGATGAA). A compositionally biased stretch (pro residues) spans 159–171 (PPGPTGPAGPPGF). Positions 205 to 244 (AGAAGPAGNPGADGQPGAKGANGAPGIAGAPGFPGARGPS) are enriched in low complexity. K256 is modified (5-hydroxylysine). 8 positions are modified to 4-hydroxyproline: P262, P265, P269, P278, P293, P299, P308, and P314. Residues 303–312 (GERGGPGSRG) show a composition bias toward gly residues. K323 is modified (5-hydroxylysine). A 4-hydroxyproline mark is found at P326, P332, P338, P347, P350, P359, P368, P374, P386, P395, P404, P407, P425, P442, P448, P454, P460, P466, P472, P484, P493, P506, P512, and P521. The span at 341-367 (KGLTGSPGSPGPDGKTGPPGPAGQDGR) shows a compositional bias: low complexity. Residues 376–395 (ARGQAGVMGFPGPKGAAGEP) are compositionally biased toward low complexity. The segment covering 454–463 (PGEAGKPGEQ) has biased composition (low complexity). Residue K533 is modified to 5-hydroxylysine. A 4-hydroxyproline mark is found at P539, P554, and P560. Residues 566–580 (SGPSGPAGPTGARGA) show a composition bias toward low complexity. A Phosphoserine modification is found at S569. P581, P587, P590, P599, P605, P623, P632, and P641 each carry 4-hydroxyproline. Residues 593–620 (AGFAGPPGADGQPGAKGEPGDAGAKGDA) are compositionally biased toward low complexity. The residue at position 644 (K644) is a 5-hydroxylysine. The span at 649 to 665 (SAGPPGATGFPGAAGRV) shows a compositional bias: low complexity. P653 and P659 each carry 4-hydroxyproline. P667 carries the post-translational modification 3-hydroxyproline. Residues P668, P677, P680, P716, P725, P743, P752, P755, P761, P776, P782, P788, P796, and P802 each carry the 4-hydroxyproline modification. Positions 710 to 725 (SGEKGSPGADGPAGAP) are enriched in low complexity. The span at 775-785 (PPGPMGPPGLA) shows a compositional bias: pro residues. At K811 the chain carries 5-hydroxylysine. P819, P822, and P825 each carry 4-hydroxyproline. Residues 819 to 831 (PGAPGAPGAPGPV) show a composition bias toward pro residues. Residues 851–865 (AGPAGARGPAGPQGP) show a composition bias toward low complexity. Residues 866-880 (RGDKGETGEQGDRGI) show a composition bias toward basic and acidic residues. 5-hydroxylysine is present on K869. The residue at position 881 (K881) is a 5-hydroxylysine; alternate. A glycan (O-linked (Gal...) hydroxylysine; alternate) is linked at K881. A 4-hydroxyproline mark is found at P896, P899, P917, and P932. Over residues 899–932 (PGEQGPSGASGPAGPRGPPGSAGSPGKDGLNGLP) the composition is skewed to low complexity. A 3-hydroxyproline modification is found at P937. Position 938 is a 4-hydroxyproline (P938). Over residues 950 to 965 (VGPPGPPGPPGPPGPP) the composition is skewed to pro residues. 3-hydroxyproline is present on P952. P953 is subject to 4-hydroxyproline. P955 carries the post-translational modification 3-hydroxyproline. Residue P956 is modified to 4-hydroxyproline. P958 carries the 3-hydroxyproline modification. Residues P959, P962, and P965 each carry the 4-hydroxyproline modification.

This sequence belongs to the fibrillar collagen family. In terms of assembly, trimers of one alpha 2(I) and two alpha 1(I) chains. Post-translationally, contains mostly 4-hydroxyproline. Proline residues at the third position of the tripeptide repeating unit (G-X-Y) are hydroxylated in some or all of the chains. Contains 3-hydroxyproline at a few sites. This modification occurs on the first proline residue in the sequence motif Gly-Pro-Hyp, where Hyp is 4-hydroxyproline. In terms of processing, lysine residues at the third position of the tripeptide repeating unit (G-X-Y) are 5-hydroxylated in some or all of the chains. Post-translationally, O-glycosylated on hydroxylated lysine residues. The O-linked glycan consists of a Glc-Gal disaccharide. In terms of tissue distribution, expressed in bones.

It localises to the secreted. The protein localises to the extracellular space. Its subcellular location is the extracellular matrix. Functionally, type I collagen is a member of group I collagen (fibrillar forming collagen). This Acratocnus sp. (strain SLP-2019) (Ground sloth) protein is Collagen alpha-1(I) chain.